The chain runs to 928 residues: MGEDFKKTGYLFGGNAVFVEELYKQYLANPASVDQTWQEFFAGIKDNNTLLNKSTAKIIIPDEIKKESLNNNLSSEDLNSLKAKEMINAYRKHAHYLANLDPLGLELRKTKNDLKLNIETFGLDSGQLEENINITDEFVGTWNCKLSELVTKFDKVYTGSIGVEFEQIENVAGKNWLYNKLESEVTFSSEDKKTILNDLVEVEGFEQYLHTKFPGAKRFSIEGGDASIVAMSKAIDLSMHQGVSEIVIGMAHRGRLNTLTKVVGKPYKAVIADFISGSVFPDELNVSGDVKYHLGYSSDRTLEDKKIHLSLADNPSHLEAVNPIVAGKVRAKQDILGDTKRSKVKAILVHGDAAFCGQGVVAESLSMSPLAAYDIGGILHFVINNQLGFTANAADTRASRYSTEFAKIIAAPILHVNGDDIEAVLKATNIAVEYRQKFGKDVVVEIICYRKYGHNEGDEPMYTQGKMYNIIKNKLTPGNIYANELVKSGVIDNNYFAKLKEEFKAKLDKEYEQAKSYKQEAHFLGGLWQGISRTRTQATITGISKKTLHDLGTKLCEIPKDFAVNPKLVKLFEARKATLTADQPIDWATAEQLAFASLLASGTNIRLTGQDSGRGTFSHRHSVLHNQIDGTTYIPLNNLSKEQAKYEVADSNLSEYAVLGFEYGYSLANPKNLVLWEAQFGDFANGAQIIFDQFISSSETKWLRMSGLVVLLPHAFEGQGPEHSSARLERFLQLAAENNMYVTYPTTPASIFHLLRRQILDDTRKPLIVMSPKSLLRHKYAVSKLDELGENTTFLPVLDEVTKVDTNNITKVILCSGKVYYDLFEMRGNNSNIAIIRLEQLYPFEKKLVASLLKKYNRTQEFIWCQEEPKNMGTWCYIVSHLNDALKEAGIKNEFKYVGREESASPAVGSLQVHNKQQEKLLRTALGI.

It belongs to the alpha-ketoglutarate dehydrogenase family. Homodimer. Part of the 2-oxoglutarate dehydrogenase (OGDH) complex composed of E1 (2-oxoglutarate dehydrogenase), E2 (dihydrolipoamide succinyltransferase) and E3 (dihydrolipoamide dehydrogenase); the complex contains multiple copies of the three enzymatic components (E1, E2 and E3). It depends on thiamine diphosphate as a cofactor.

It carries out the reaction N(6)-[(R)-lipoyl]-L-lysyl-[protein] + 2-oxoglutarate + H(+) = N(6)-[(R)-S(8)-succinyldihydrolipoyl]-L-lysyl-[protein] + CO2. Functionally, E1 component of the 2-oxoglutarate dehydrogenase (OGDH) complex which catalyzes the decarboxylation of 2-oxoglutarate, the first step in the conversion of 2-oxoglutarate to succinyl-CoA and CO(2). The chain is 2-oxoglutarate dehydrogenase E1 component (sucA) from Rickettsia conorii (strain ATCC VR-613 / Malish 7).